The following is a 280-amino-acid chain: Protein FLOURY 1-like (280 aa).

A helical transmembrane segment spans residues Gly22 to Leu42. The interval Val153 to Leu187 is disordered. Residues Glu169–Leu187 show a composition bias toward acidic residues. Residues Leu188 to Met280 form the GTD-binding domain.

It is found in the membrane. In Arabidopsis thaliana (Mouse-ear cress), this protein is Protein FLOURY 1-like.